We begin with the raw amino-acid sequence, 367 residues long: Phosphoribosylaminoimidazole-succinocarboxamide synthase (367 aa).

It belongs to the SAICAR synthetase family.

It carries out the reaction 5-amino-1-(5-phospho-D-ribosyl)imidazole-4-carboxylate + L-aspartate + ATP = (2S)-2-[5-amino-1-(5-phospho-beta-D-ribosyl)imidazole-4-carboxamido]succinate + ADP + phosphate + 2 H(+). Its pathway is purine metabolism; IMP biosynthesis via de novo pathway; 5-amino-1-(5-phospho-D-ribosyl)imidazole-4-carboxamide from 5-amino-1-(5-phospho-D-ribosyl)imidazole-4-carboxylate: step 1/2. This is Phosphoribosylaminoimidazole-succinocarboxamide synthase from Shewanella baltica (strain OS223).